Consider the following 349-residue polypeptide: Phosphoribosylformylglycinamidine cyclo-ligase (349 aa).

The protein belongs to the AIR synthase family.

The protein resides in the cytoplasm. The enzyme catalyses 2-formamido-N(1)-(5-O-phospho-beta-D-ribosyl)acetamidine + ATP = 5-amino-1-(5-phospho-beta-D-ribosyl)imidazole + ADP + phosphate + H(+). It participates in purine metabolism; IMP biosynthesis via de novo pathway; 5-amino-1-(5-phospho-D-ribosyl)imidazole from N(2)-formyl-N(1)-(5-phospho-D-ribosyl)glycinamide: step 2/2. The protein is Phosphoribosylformylglycinamidine cyclo-ligase of Psychrobacter cryohalolentis (strain ATCC BAA-1226 / DSM 17306 / VKM B-2378 / K5).